The sequence spans 314 residues: Methionyl-tRNA formyltransferase (314 aa).

109 to 112 (SLLP) lines the (6S)-5,6,7,8-tetrahydrofolate pocket.

This sequence belongs to the Fmt family.

The catalysed reaction is L-methionyl-tRNA(fMet) + (6R)-10-formyltetrahydrofolate = N-formyl-L-methionyl-tRNA(fMet) + (6S)-5,6,7,8-tetrahydrofolate + H(+). Its function is as follows. Attaches a formyl group to the free amino group of methionyl-tRNA(fMet). The formyl group appears to play a dual role in the initiator identity of N-formylmethionyl-tRNA by promoting its recognition by IF2 and preventing the misappropriation of this tRNA by the elongation apparatus. In Syntrophomonas wolfei subsp. wolfei (strain DSM 2245B / Goettingen), this protein is Methionyl-tRNA formyltransferase.